Here is a 59-residue protein sequence, read N- to C-terminus: Large ribosomal subunit protein eL29 (59 aa).

The segment covering 1–26 has biased composition (basic residues); sequence MAKSKNHTAHNQTRKAHRNGIKKPKT. Positions 1–37 are disordered; that stretch reads MAKSKNHTAHNQTRKAHRNGIKKPKTYKYPSLKGVDP. K52 is covalently cross-linked (Glycyl lysine isopeptide (Lys-Gly) (interchain with G-Cter in ubiquitin)).

The protein belongs to the eukaryotic ribosomal protein eL29 family. Component of the large ribosomal subunit (LSU). Mature yeast ribosomes consist of a small (40S) and a large (60S) subunit. The 40S small subunit contains 1 molecule of ribosomal RNA (18S rRNA) and 33 different proteins (encoded by 57 genes). The large 60S subunit contains 3 rRNA molecules (25S, 5.8S and 5S rRNA) and 46 different proteins (encoded by 81 genes).

It is found in the cytoplasm. Its function is as follows. Component of the ribosome, a large ribonucleoprotein complex responsible for the synthesis of proteins in the cell. The small ribosomal subunit (SSU) binds messenger RNAs (mRNAs) and translates the encoded message by selecting cognate aminoacyl-transfer RNA (tRNA) molecules. The large subunit (LSU) contains the ribosomal catalytic site termed the peptidyl transferase center (PTC), which catalyzes the formation of peptide bonds, thereby polymerizing the amino acids delivered by tRNAs into a polypeptide chain. The nascent polypeptides leave the ribosome through a tunnel in the LSU and interact with protein factors that function in enzymatic processing, targeting, and the membrane insertion of nascent chains at the exit of the ribosomal tunnel. This Saccharomyces cerevisiae (strain ATCC 204508 / S288c) (Baker's yeast) protein is Large ribosomal subunit protein eL29.